The primary structure comprises 127 residues: Fluoride-specific ion channel FluC (127 aa).

4 helical membrane passes run 7–27 (LFLISCGASLGAMSRHGLTLL), 37–57 (FGTLIANYIGCLIMGIMLAMF), 70–90 (FFVTGFLGSLTTFSAFSAEVI), and 102–122 (ITITSLHILGCLFFTTLGVFI). Na(+) contacts are provided by Gly77 and Thr80.

This sequence belongs to the fluoride channel Fluc/FEX (TC 1.A.43) family.

The protein localises to the cell inner membrane. It carries out the reaction fluoride(in) = fluoride(out). With respect to regulation, na(+) is not transported, but it plays an essential structural role and its presence is essential for fluoride channel function. Functionally, fluoride-specific ion channel. Important for reducing fluoride concentration in the cell, thus reducing its toxicity. The sequence is that of Fluoride-specific ion channel FluC from Histophilus somni (strain 129Pt) (Haemophilus somnus).